The chain runs to 235 residues: Adenosine 5'-phosphosulfate reductase (235 aa).

Residues C121, C122, C204, and C207 each contribute to the [4Fe-4S] cluster site. C230 serves as the catalytic Nucleophile; cysteine thiosulfonate intermediate.

Belongs to the PAPS reductase family. CysH subfamily. The cofactor is [4Fe-4S] cluster.

Its subcellular location is the cytoplasm. It carries out the reaction [thioredoxin]-disulfide + sulfite + AMP + 2 H(+) = adenosine 5'-phosphosulfate + [thioredoxin]-dithiol. The protein operates within sulfur metabolism; hydrogen sulfide biosynthesis; sulfite from sulfate. Its function is as follows. Catalyzes the formation of sulfite from adenosine 5'-phosphosulfate (APS) using thioredoxin as an electron donor. In Geobacillus thermodenitrificans (strain NG80-2), this protein is Adenosine 5'-phosphosulfate reductase.